Consider the following 605-residue polypeptide: Dynein axonemal intermediate chain 2 (605 aa).

WD repeat units lie at residues 150 to 203 (KTIN…IWDL), 208 to 246 (KPEL…CWDT), 253 to 294 (AELS…WWDI), 301 to 347 (TEVV…SCNR), 355 to 393 (KIVC…IWSE), 399 to 437 (SIMW…IWDF), and 443 to 481 (DPTL…LLEV). Positions 568–605 (IKLTPVPQQPSPEEDQVVEEGEEAAGEEGDEEVEEDLA) are disordered. The segment covering 579 to 605 (PEEDQVVEEGEEAAGEEGDEEVEEDLA) has biased composition (acidic residues).

This sequence belongs to the dynein intermediate chain family. In terms of assembly, consists of at least two heavy chains and a number of intermediate and light chains. Interacts with DNAAF2. Interacts with DNAAF6/PIH1D3. Interacts with HEATR2; probably involved in outer arm dynein assembly. Interacts with CFAP53. As to expression, highly expressed in trachea and testis. Expressed in respiratory ciliated cells (at protein level).

The protein localises to the cytoplasm. It is found in the cytoskeleton. Its subcellular location is the cilium axoneme. The protein resides in the dynein axonemal particle. Part of the dynein complex of respiratory cilia. This Homo sapiens (Human) protein is Dynein axonemal intermediate chain 2.